Reading from the N-terminus, the 73-residue chain is Toxin Td7 (73 aa).

The signal sequence occupies residues 1–7; sequence IGMAVEC. In terms of domain architecture, LCN-type CS-alpha/beta spans 8 to 70; sequence KDGYLVGADG…VWDSATNRCG (63 aa). 4 disulfides stabilise this stretch: C18–C69, C22–C44, C30–C50, and C34–C52. Lysine amide is present on K71.

It belongs to the long (4 C-C) scorpion toxin superfamily. Sodium channel inhibitor family. Beta subfamily. As to expression, expressed by the venom gland.

Its subcellular location is the secreted. In terms of biological role, beta toxins bind voltage-independently at site-4 of sodium channels (Nav) and shift the voltage of activation toward more negative potentials thereby affecting sodium channel activation and promoting spontaneous and repetitive firing. This chain is Toxin Td7, found in Tityus discrepans (Venezuelan scorpion).